We begin with the raw amino-acid sequence, 62 residues long: Alpha-conotoxin-like Bn1.3 (62 aa).

The N-terminal stretch at 1-18 is a signal peptide; sequence MGMRMMFTVFLLVVLATA. Positions 19 to 48 are excised as a propeptide; that stretch reads VLPVTLDRASDGRNAAANAKTPRLIAPFIR. Disulfide bonds link cysteine 51/cysteine 57 and cysteine 52/cysteine 61. Position 61 is a cysteine amide (cysteine 61).

Belongs to the conotoxin A superfamily. Expressed by the venom duct.

The protein localises to the secreted. Functionally, does not show activity on the acetylcholine receptors tested. In Conus bandanus (Banded marble cone), this protein is Alpha-conotoxin-like Bn1.3.